The primary structure comprises 187 residues: Putative protein YbeM (187 aa).

In terms of domain architecture, CN hydrolase spans 1–163 (MMTTILTIHV…PALIMAEVTP (163 aa)).

The protein belongs to the carbon-nitrogen hydrolase superfamily. NIT1/NIT2 family.

Pseudogene resulting from a nucleotide deletion that introduces a premature stop codon at position 66. This is the C-terminal fragment. The intact protein (AC A0A140NCB4) hydrolyzes deaminated glutathione (dGSH, 2-oxoglutaramate) to alpha-ketoglutarate (alpha-KG) and cysteinylglycine, has less activity against alpha-ketoglutaramate (a-KGM) and no activity on glutathione or L-glutamine. May function as a metabolite repair enzyme. This is Putative protein YbeM (ybeM) from Escherichia coli (strain K12).